The chain runs to 116 residues: Iron-sulfur cluster insertion protein ErpA (116 aa).

Residues C44, C108, and C110 each contribute to the iron-sulfur cluster site.

Belongs to the HesB/IscA family. Homodimer. The cofactor is iron-sulfur cluster.

In terms of biological role, required for insertion of 4Fe-4S clusters for at least IspG. The polypeptide is Iron-sulfur cluster insertion protein ErpA (Stutzerimonas stutzeri (strain A1501) (Pseudomonas stutzeri)).